Consider the following 156-residue polypeptide: Ribosomal RNA large subunit methyltransferase H (156 aa).

S-adenosyl-L-methionine contacts are provided by residues Leu73, Gly104, and 123–128 (LSPLTL).

Belongs to the RNA methyltransferase RlmH family. Homodimer.

The protein resides in the cytoplasm. It catalyses the reaction pseudouridine(1915) in 23S rRNA + S-adenosyl-L-methionine = N(3)-methylpseudouridine(1915) in 23S rRNA + S-adenosyl-L-homocysteine + H(+). Its function is as follows. Specifically methylates the pseudouridine at position 1915 (m3Psi1915) in 23S rRNA. The polypeptide is Ribosomal RNA large subunit methyltransferase H (Photobacterium profundum (strain SS9)).